The sequence spans 32 residues: U13-ctenitoxin-Pn1a (32 aa).

3 disulfides stabilise this stretch: C3–C17, C10–C21, and C16–C30.

As to expression, expressed by the venom gland.

The protein localises to the secreted. Acts as a neurotoxin. The protein is U13-ctenitoxin-Pn1a of Phoneutria nigriventer (Brazilian armed spider).